A 666-amino-acid polypeptide reads, in one-letter code: DNA mismatch repair protein MutL (666 aa).

It belongs to the DNA mismatch repair MutL/HexB family.

In terms of biological role, this protein is involved in the repair of mismatches in DNA. It is required for dam-dependent methyl-directed DNA mismatch repair. May act as a 'molecular matchmaker', a protein that promotes the formation of a stable complex between two or more DNA-binding proteins in an ATP-dependent manner without itself being part of a final effector complex. The chain is DNA mismatch repair protein MutL from Clostridium botulinum (strain Kyoto / Type A2).